The primary structure comprises 459 residues: GTPase Der (459 aa).

EngA-type G domains are found at residues 4–169 (PLVA…PEVA) and 179–355 (IAVA…AAHR). GTP-binding positions include 10–17 (GRPNVGKS), 57–61 (DTGGL), 120–123 (NKCE), 185–192 (GRPNVGKS), 232–236 (DTAGI), and 297–300 (NKWD). The KH-like domain maps to 356-441 (KRIATSVVNE…PIRFRWRSKS (86 aa)).

It belongs to the TRAFAC class TrmE-Era-EngA-EngB-Septin-like GTPase superfamily. EngA (Der) GTPase family. Associates with the 50S ribosomal subunit.

In terms of biological role, GTPase that plays an essential role in the late steps of ribosome biogenesis. This Synechococcus sp. (strain JA-3-3Ab) (Cyanobacteria bacterium Yellowstone A-Prime) protein is GTPase Der.